The primary structure comprises 468 residues: ATP synthase subunit beta (468 aa).

Position 155 to 162 (155 to 162 (GGAGVGKT)) interacts with ATP.

Belongs to the ATPase alpha/beta chains family. As to quaternary structure, F-type ATPases have 2 components, CF(1) - the catalytic core - and CF(0) - the membrane proton channel. CF(1) has five subunits: alpha(3), beta(3), gamma(1), delta(1), epsilon(1). CF(0) has three main subunits: a(1), b(2) and c(9-12). The alpha and beta chains form an alternating ring which encloses part of the gamma chain. CF(1) is attached to CF(0) by a central stalk formed by the gamma and epsilon chains, while a peripheral stalk is formed by the delta and b chains.

It is found in the cell membrane. The enzyme catalyses ATP + H2O + 4 H(+)(in) = ADP + phosphate + 5 H(+)(out). Its function is as follows. Produces ATP from ADP in the presence of a proton gradient across the membrane. The catalytic sites are hosted primarily by the beta subunits. This is ATP synthase subunit beta from Bacillus cereus (strain B4264).